Reading from the N-terminus, the 519-residue chain is Ribonuclease Y 1 (519 aa).

A helical transmembrane segment spans residues 3-23; the sequence is VPIVILAIIAIVVGVVGGYYL. The span at 92–120 shows a compositional bias: basic and acidic residues; it reads QREETLDRKDNSLEKRENSLNRRDKKLSA. The segment at 92 to 124 is disordered; sequence QREETLDRKDNSLEKRENSLNRRDKKLSAEEQN. One can recognise a KH domain in the interval 209–272; sequence TITVVTLPND…EVAKIALEKL (64 aa). Residues 335 to 428 form the HD domain; it reads ALAHSIEVAK…VSTADIISAT (94 aa).

The protein belongs to the RNase Y family.

Its subcellular location is the cell membrane. In terms of biological role, endoribonuclease that initiates mRNA decay. This is Ribonuclease Y 1 from Levilactobacillus brevis (strain ATCC 367 / BCRC 12310 / CIP 105137 / JCM 1170 / LMG 11437 / NCIMB 947 / NCTC 947) (Lactobacillus brevis).